The following is a 116-amino-acid chain: Protein Rev (116 aa).

Ser-8 carries the phosphoserine; by host CK2 modification. Residues 18 to 26 (LIKSLYQSN) are homomultimerization. Disordered regions lie at residues 20 to 46 (KSLY…RRWR) and 84 to 116 (DSSE…GAKE). The short motif at 34–50 (TRQARRNRRRRWRERQR) is the Nuclear localization signal and RNA-binding (RRE) element. The segment covering 36 to 46 (QARRNRRRRWR) has biased composition (basic residues). Residues 73 to 84 (LQLPPLERLTLD) carry the Nuclear export signal and binding to XPO1 motif. The span at 88–98 (DCGTSGTQGVG) shows a compositional bias: polar residues. Residues Ser-92 and Ser-99 each carry the phosphoserine; by host modification.

It belongs to the HIV-1 REV protein family. In terms of assembly, homomultimer; when bound to the RRE. Multimeric assembly is essential for activity and may involve XPO1. Binds to human KPNB1, XPO1, TNPO1, RANBP5 and IPO7. Interacts with the viral Integrase. Interacts with human KHDRBS1. Interacts with human NAP1; this interaction decreases Rev multimerization and stimulates its activity. Interacts with human DEAD-box helicases DDX3 and DDX24; these interactions may serve for viral RNA export to the cytoplasm and packaging, respectively. Interacts with human PSIP1; this interaction may inhibit HIV-1 DNA integration by promoting dissociation of the Integrase-LEDGF/p75 complex. In terms of processing, asymmetrically arginine dimethylated at one site by host PRMT6. Methylation impairs the RNA-binding activity and export of viral RNA from the nucleus to the cytoplasm. Phosphorylated by protein kinase CK2. Presence of, and maybe binding to the N-terminus of the regulatory beta subunit of CK2 is necessary for CK2-mediated Rev's phosphorylation.

It localises to the host nucleus. Its subcellular location is the host nucleolus. The protein localises to the host cytoplasm. Functionally, escorts unspliced or incompletely spliced viral pre-mRNAs (late transcripts) out of the nucleus of infected cells. These pre-mRNAs carry a recognition sequence called Rev responsive element (RRE) located in the env gene, that is not present in fully spliced viral mRNAs (early transcripts). This function is essential since most viral proteins are translated from unspliced or partially spliced pre-mRNAs which cannot exit the nucleus by the pathway used by fully processed cellular mRNAs. Rev itself is translated from a fully spliced mRNA that readily exits the nucleus. Rev's nuclear localization signal (NLS) binds directly to KPNB1/Importin beta-1 without previous binding to KPNA1/Importin alpha-1. KPNB1 binds to the GDP bound form of RAN (Ran-GDP) and targets Rev to the nucleus. In the nucleus, the conversion from Ran-GDP to Ran-GTP dissociates Rev from KPNB1 and allows Rev's binding to the RRE in viral pre-mRNAs. Rev multimerization on the RRE via cooperative assembly exposes its nuclear export signal (NES) to the surface. Rev can then form a complex with XPO1/CRM1 and Ran-GTP, leading to nuclear export of the complex. Conversion from Ran-GTP to Ran-GDP mediates dissociation of the Rev/RRE/XPO1/RAN complex, so that Rev can return to the nucleus for a subsequent round of export. Beside KPNB1, also seems to interact with TNPO1/Transportin-1, RANBP5/IPO5 and IPO7/RANBP7 for nuclear import. The nucleoporin-like HRB/RIP is an essential cofactor that probably indirectly interacts with Rev to release HIV RNAs from the perinuclear region to the cytoplasm. The sequence is that of Protein Rev from Human immunodeficiency virus type 1 group M subtype B (isolate RF/HAT3) (HIV-1).